A 760-amino-acid polypeptide reads, in one-letter code: ATP-dependent RNA helicase dbp7 (760 aa).

Residues 23 to 34 (KLKGGTWRDRLS) are compositionally biased toward basic and acidic residues. Residues 23–129 (KLKGGTWRDR…EPVEDAKPTN (107 aa)) form a disordered region. Over residues 38–47 (IAQHRTKNPR) the composition is skewed to basic residues. A compositionally biased stretch (polar residues) spans 58–72 (KGPQNPNRIQVSSSR). Residues 77 to 94 (QKTDADGDNEKSRHDNKQ) show a composition bias toward basic and acidic residues. The segment covering 99–110 (FVSSLFSKNPTP) has biased composition (polar residues). Residues 137-166 (DTFTNLGLSPSLAAHLLTKLELKAPTGIQK) carry the Q motif motif. The Helicase ATP-binding domain occupies 170 to 372 (SQLLKEDSDA…EISLKDAVHI (203 aa)). An ATP-binding site is contributed by 183-190 (AETGSGKT). Positions 308–311 (DEGD) match the DEAD box motif. In terms of domain architecture, Helicase C-terminal spans 396 to 609 (QLKQSYAIVA…LTRTTAEDIL (214 aa)). Disordered stretches follow at residues 453–490 (YRDESEDEDEEKEDDDEDNSKTKSEASPHGTIAPAVAF) and 692–760 (SKIN…FNLA). Residues 456–470 (ESEDEDEEKEDDDED) are compositionally biased toward acidic residues. The segment covering 701–716 (PGDKEAKKDYKAERNT) has biased composition (basic and acidic residues). Over residues 731–740 (QPSNDATSAA) the composition is skewed to polar residues.

This sequence belongs to the DEAD box helicase family. DDX31/DBP7 subfamily.

It is found in the nucleus. The protein resides in the nucleolus. The catalysed reaction is ATP + H2O = ADP + phosphate + H(+). Functionally, ATP-binding RNA helicase involved in the biogenesis of 60S ribosomal subunits and is required for the normal formation of 25S and 5.8S rRNAs. In Aspergillus oryzae (strain ATCC 42149 / RIB 40) (Yellow koji mold), this protein is ATP-dependent RNA helicase dbp7 (dbp7).